Consider the following 383-residue polypeptide: Acetylornithine deacetylase (383 aa).

H80 contacts Zn(2+). The active site involves D82. D112 lines the Zn(2+) pocket. E144 is an active-site residue. Residues E145, E169, and H355 each contribute to the Zn(2+) site.

Belongs to the peptidase M20A family. ArgE subfamily. In terms of assembly, homodimer. It depends on Zn(2+) as a cofactor. Requires Co(2+) as cofactor. Glutathione is required as a cofactor.

The protein resides in the cytoplasm. The enzyme catalyses N(2)-acetyl-L-ornithine + H2O = L-ornithine + acetate. It functions in the pathway amino-acid biosynthesis; L-arginine biosynthesis; L-ornithine from N(2)-acetyl-L-ornithine (linear): step 1/1. In terms of biological role, catalyzes the hydrolysis of the amide bond of N(2)-acetylated L-amino acids. Cleaves the acetyl group from N-acetyl-L-ornithine to form L-ornithine, an intermediate in L-arginine biosynthesis pathway, and a branchpoint in the synthesis of polyamines. The chain is Acetylornithine deacetylase from Escherichia coli O127:H6 (strain E2348/69 / EPEC).